The chain runs to 74 residues: Peptide BmKb1 (74 aa).

The first 22 residues, 1 to 22 (MEIKYLLTVFLVLLIVSDHCQA), serve as a signal peptide directing secretion. The residue at position 40 (K40) is a Lysine amide. The propeptide occupies 46 to 74 (DLNGYIDHFKNFRKRDAELEELLSKLPIY).

This sequence belongs to the non-disulfide-bridged peptide (NDBP) superfamily. Short antimicrobial peptide (group 4) family. In terms of tissue distribution, expressed by the venom gland.

The protein resides in the secreted. It is found in the target cell membrane. In terms of biological role, has antibacterial activity against Gram-positive bacteria S.aureus, M.luteus, B.subtilis, and Gram-negative bacteria E.coli, and P.aeruginosa. This is Peptide BmKb1 from Olivierus martensii (Manchurian scorpion).